We begin with the raw amino-acid sequence, 430 residues long: 3-phosphoshikimate 1-carboxyvinyltransferase (430 aa).

Positions 23, 24, and 28 each coordinate 3-phosphoshikimate. Lys-23 provides a ligand contact to phosphoenolpyruvate. Phosphoenolpyruvate contacts are provided by Gly-95 and Arg-123. 3-phosphoshikimate-binding residues include Ser-169, Gln-171, Asp-315, and Lys-342. Residue Gln-171 participates in phosphoenolpyruvate binding. Residue Asp-315 is the Proton acceptor of the active site. Residues Arg-346 and Arg-388 each coordinate phosphoenolpyruvate.

It belongs to the EPSP synthase family. Monomer.

It localises to the cytoplasm. It carries out the reaction 3-phosphoshikimate + phosphoenolpyruvate = 5-O-(1-carboxyvinyl)-3-phosphoshikimate + phosphate. It functions in the pathway metabolic intermediate biosynthesis; chorismate biosynthesis; chorismate from D-erythrose 4-phosphate and phosphoenolpyruvate: step 6/7. In terms of biological role, catalyzes the transfer of the enolpyruvyl moiety of phosphoenolpyruvate (PEP) to the 5-hydroxyl of shikimate-3-phosphate (S3P) to produce enolpyruvyl shikimate-3-phosphate and inorganic phosphate. This is 3-phosphoshikimate 1-carboxyvinyltransferase from Streptococcus pyogenes serotype M6 (strain ATCC BAA-946 / MGAS10394).